Reading from the N-terminus, the 144-residue chain is MRQTTIVNKENSNKKWFVVDAENQVLGRLASLVASVLRGKTKPTFTPNADMGDNVIIINAEKVKLTGKKEKNKVYYSHSGYPGGLKARTAEKLREEKPTALLEKAISGMIPHTKLGNQQRKNLYVYAGPEHKHQAQNPERLEVK.

Belongs to the universal ribosomal protein uL13 family. In terms of assembly, part of the 50S ribosomal subunit.

Its function is as follows. This protein is one of the early assembly proteins of the 50S ribosomal subunit, although it is not seen to bind rRNA by itself. It is important during the early stages of 50S assembly. This chain is Large ribosomal subunit protein uL13, found in Mycoplasmopsis synoviae (strain 53) (Mycoplasma synoviae).